An 83-amino-acid chain; its full sequence is Exodeoxyribonuclease 7 small subunit (83 aa).

This sequence belongs to the XseB family. As to quaternary structure, heterooligomer composed of large and small subunits.

The protein resides in the cytoplasm. It carries out the reaction Exonucleolytic cleavage in either 5'- to 3'- or 3'- to 5'-direction to yield nucleoside 5'-phosphates.. Its function is as follows. Bidirectionally degrades single-stranded DNA into large acid-insoluble oligonucleotides, which are then degraded further into small acid-soluble oligonucleotides. In Bradyrhizobium sp. (strain ORS 278), this protein is Exodeoxyribonuclease 7 small subunit.